We begin with the raw amino-acid sequence, 341 residues long: Inositol monophosphatase 3 (341 aa).

The helical transmembrane segment at 11 to 31 (LGIAVFCLLGVGVIYHLYAGV) threads the bilayer. Glu-117, Asp-157, Leu-159, Asp-160, and Asp-283 together coordinate Mg(2+). Glu-117 is a binding site for substrate. Substrate-binding positions include 159 to 162 (LDAT) and Asp-283.

It belongs to the inositol monophosphatase superfamily. Mg(2+) is required as a cofactor.

Its subcellular location is the membrane. The catalysed reaction is a myo-inositol phosphate + H2O = myo-inositol + phosphate. Its pathway is polyol metabolism; myo-inositol biosynthesis; myo-inositol from D-glucose 6-phosphate: step 2/2. The chain is Inositol monophosphatase 3 (bpnt2) from Danio rerio (Zebrafish).